A 295-amino-acid chain; its full sequence is 2S seed storage protein (295 aa).

An N-terminal signal peptide occupies residues 1–20; it reads MAKQIVLALAFAALVAFATA. Residues 21-161 constitute a propeptide that is removed on maturation; the sequence is HTTIITTTIE…TITTTVTESN (141 aa). Polar residues predominate over residues 195–208; the sequence is EQQMQQSPRSTRPY. The disordered stretch occupies residues 195–215; the sequence is EQQMQQSPRSTRPYQQRPGQQ.

The protein belongs to the 2S seed storage albumins family. Post-translationally, the 38 kDa precursor may be cleaved into two polypeptides of approximately the same size. The mature protein is composed of a single polypeptide containing one or more intra-molecular disulfide linkages.

Its function is as follows. This is a 2S seed storage protein. This Helianthus annuus (Common sunflower) protein is 2S seed storage protein (HAG5).